The following is a 132-amino-acid chain: EF-hand calcium-binding domain-containing protein 10 (132 aa).

EF-hand domains lie at 64–99 and 120–132; these read MDNSNTVSMFEMMDMAGRGCISFVQYKEALKNLGLC and EMNKRMEKMWSMF.

The protein is EF-hand calcium-binding domain-containing protein 10 (Efcab10) of Mus musculus (Mouse).